Reading from the N-terminus, the 519-residue chain is Laccase-2 (519 aa).

A signal peptide spans Met1 to Ala20. Plastocyanin-like domains lie at Ile22–Tyr147 and Val159–Tyr301. An N-linked (GlcNAc...) asparagine glycan is attached at Asn74. The Cu cation site is built by His84, His86, His129, and His131. 2 cysteine pairs are disulfide-bonded: Cys105/Cys508 and Cys137/Cys225. 6 N-linked (GlcNAc...) asparagine glycosylation sites follow: Asn161, Asn228, Asn237, Asn271, Asn353, and Asn361. In terms of domain architecture, Plastocyanin-like 3 spans Thr368–Asp490. Residues His415, His418, His420, His472, Cys473, His474, and His478 each contribute to the Cu cation site.

Belongs to the multicopper oxidase family. Homodimer. The cofactor is Cu cation.

The protein localises to the secreted. It catalyses the reaction 4 hydroquinone + O2 = 4 benzosemiquinone + 2 H2O. Lignin degradation and detoxification of lignin-derived products. This is Laccase-2 from Trametes villosa (White-rot fungus).